Consider the following 276-residue polypeptide: Protein TabB (276 aa).

It belongs to the transferase hexapeptide repeat family. Requires pyridoxal 5'-phosphate as cofactor.

The polypeptide is Protein TabB (tabB) (Pseudomonas amygdali pv. tabaci (Pseudomonas syringae pv. tabaci)).